The primary structure comprises 673 residues: tRNA uridine 5-carboxymethylaminomethyl modification enzyme MnmG (673 aa).

17-22 serves as a coordination point for FAD; it reads GGGHAG. 284–298 contacts NAD(+); it reads GPRYCPSVEDKINRF.

Belongs to the MnmG family. As to quaternary structure, homodimer. Heterotetramer of two MnmE and two MnmG subunits. Requires FAD as cofactor.

It is found in the cytoplasm. NAD-binding protein involved in the addition of a carboxymethylaminomethyl (cmnm) group at the wobble position (U34) of certain tRNAs, forming tRNA-cmnm(5)s(2)U34. In Polaromonas sp. (strain JS666 / ATCC BAA-500), this protein is tRNA uridine 5-carboxymethylaminomethyl modification enzyme MnmG.